A 172-amino-acid polypeptide reads, in one-letter code: MSNKTAKNIRPGELNLKEKLVHINRTAKVVKGGKRFGFNAIVVVGDKEGHVGYGLGKANEVQDAIAKGVEDGKKNVVKVPIVKGTIPHQVVAKYGSAKVLMKPATPGTGLIAGGAVRAVLEMAGIHDILTKSLGSSNPHNVVKAAIKGLESMSDAYEVGERRSKNLKEVFES.

In terms of domain architecture, S5 DRBM spans 16–79 (LKEKLVHINR…EDGKKNVVKV (64 aa)).

The protein belongs to the universal ribosomal protein uS5 family. As to quaternary structure, part of the 30S ribosomal subunit. Contacts proteins S4 and S8.

In terms of biological role, with S4 and S12 plays an important role in translational accuracy. Its function is as follows. Located at the back of the 30S subunit body where it stabilizes the conformation of the head with respect to the body. The protein is Small ribosomal subunit protein uS5 of Prosthecochloris aestuarii (strain DSM 271 / SK 413).